A 286-amino-acid polypeptide reads, in one-letter code: Puff II/9-1 protein (286 aa).

The first 19 residues, 1 to 19 (MKQFIVLTVVLLAIQELQG), serve as a signal peptide directing secretion. A helical region spans residues 61–235 (ITAIKKDNDF…ENALNTLRCE (175 aa)). Asparagine 156 carries an N-linked (GlcNAc...) asparagine glycan.

The chain is Puff II/9-1 protein (II/9-1) from Bradysia coprophila (Dark-winged fungus gnat).